The chain runs to 339 residues: Methionine import ATP-binding protein MetN 2 (339 aa).

One can recognise an ABC transporter domain in the interval 2 to 241 (ISFNNVSKVY…PKTKTTQNFV (240 aa)). Residue 38 to 45 (GFSGAGKS) coordinates ATP.

The protein belongs to the ABC transporter superfamily. Methionine importer (TC 3.A.1.24) family. In terms of assembly, the complex is composed of two ATP-binding proteins (MetN), two transmembrane proteins (MetI) and a solute-binding protein (MetQ).

The protein resides in the cell membrane. The catalysed reaction is L-methionine(out) + ATP + H2O = L-methionine(in) + ADP + phosphate + H(+). It catalyses the reaction D-methionine(out) + ATP + H2O = D-methionine(in) + ADP + phosphate + H(+). In terms of biological role, part of the ABC transporter complex MetNIQ involved in methionine import. Responsible for energy coupling to the transport system. The chain is Methionine import ATP-binding protein MetN 2 from Bacillus cereus (strain ATCC 10987 / NRS 248).